A 467-amino-acid chain; its full sequence is MTTGKIVQIIGAVVDVEFPQGEVPRVYDALNVVDAQERLVLEVQQQIGGGVVRCIVMGSSDGLRRGLTVENTGAPISVPVGTKTLGRIMNVLGDAIDECGDIDAEEHYAIHREAPSYEEQSNSTELLETGVKVIDLVCPFAKGGKIGLFGGAGVGKTVNMMELINNIALQHSGLSVFAGVGERTREGNDFYFEMQEAGVVNIEKPEESKVAMVYGQMNEPPGNRLRVALTGLTMAERFRDEGRDVLLFVDNIYRYTLAGTEVSALLGRMPSAVGYQPTLAEEMGVLQERITSTKQGSITSVQAVYVPADDLTDPSPATTFAHLDATVVLNRNIAAMGLYPAIDPLDSTSRQLDPLVVGQEHYDIARGVQSTLQRYKELKDIIAILGMDELSEEDKQVVSRARKIEKFLTQPYHVAEVFTGDPGIYVPLKDTLAGFKGLLAGDYDDVPEQAFMYCGKIEDALEKAKKL.

Residue 150 to 157 (GGAGVGKT) participates in ATP binding.

The protein belongs to the ATPase alpha/beta chains family. F-type ATPases have 2 components, CF(1) - the catalytic core - and CF(0) - the membrane proton channel. CF(1) has five subunits: alpha(3), beta(3), gamma(1), delta(1), epsilon(1). CF(0) has three main subunits: a(1), b(2) and c(9-12). The alpha and beta chains form an alternating ring which encloses part of the gamma chain. CF(1) is attached to CF(0) by a central stalk formed by the gamma and epsilon chains, while a peripheral stalk is formed by the delta and b chains.

The protein resides in the cell inner membrane. It carries out the reaction ATP + H2O + 4 H(+)(in) = ADP + phosphate + 5 H(+)(out). In terms of biological role, produces ATP from ADP in the presence of a proton gradient across the membrane. The catalytic sites are hosted primarily by the beta subunits. This Aliivibrio fischeri (strain ATCC 700601 / ES114) (Vibrio fischeri) protein is ATP synthase subunit beta.